We begin with the raw amino-acid sequence, 486 residues long: Glutamyl-tRNA(Gln) amidotransferase subunit A (486 aa).

Active-site charge relay system residues include lysine 79 and serine 154. Serine 178 functions as the Acyl-ester intermediate in the catalytic mechanism.

Belongs to the amidase family. GatA subfamily. As to quaternary structure, heterotrimer of A, B and C subunits.

The catalysed reaction is L-glutamyl-tRNA(Gln) + L-glutamine + ATP + H2O = L-glutaminyl-tRNA(Gln) + L-glutamate + ADP + phosphate + H(+). Allows the formation of correctly charged Gln-tRNA(Gln) through the transamidation of misacylated Glu-tRNA(Gln) in organisms which lack glutaminyl-tRNA synthetase. The reaction takes place in the presence of glutamine and ATP through an activated gamma-phospho-Glu-tRNA(Gln). This is Glutamyl-tRNA(Gln) amidotransferase subunit A from Dehalococcoides mccartyi (strain ATCC BAA-2100 / JCM 16839 / KCTC 5957 / BAV1).